A 377-amino-acid polypeptide reads, in one-letter code: Probable staphylococcal-like nuclease CAN3 (377 aa).

The N-myristoyl glycine moiety is linked to residue Gly2. Cys7 is lipidated: S-palmitoyl cysteine. The interval 15–57 (GDHYPYYKPTSRPHYQPPHYHGQPAAPPAPPQQQPLGPHGVTP) is disordered. Residues 27 to 38 (PHYQPPHYHGQP) are compositionally biased toward low complexity. The TNase-like domain maps to 177-353 (NTLPVYDKCI…KAANRGLWAS (177 aa)). A Ca(2+)-binding site is contributed by Asp190. Arg260 is a catalytic residue. Residue Asp265 coordinates Ca(2+). Residues Glu268 and Arg302 contribute to the active site.

The protein belongs to the thermonuclease family. Requires Ca(2+) as cofactor.

The protein resides in the cell membrane. Enzyme that catalyzes the hydrolysis of both DNA and RNA at the 5' position of the phosphodiester bond. This chain is Probable staphylococcal-like nuclease CAN3, found in Oryza sativa subsp. japonica (Rice).